The primary structure comprises 274 residues: Large ribosomal subunit protein uL2 (274 aa).

The segment at 223 to 274 is disordered; the sequence is GIAMNPVDHPHGGGEGRSKGNHPVTPWGMPTKGYKTRKKKQSDKYIISRRKK. Basic and acidic residues predominate over residues 230 to 240; the sequence is DHPHGGGEGRS. Residues 256 to 274 are compositionally biased toward basic residues; sequence YKTRKKKQSDKYIISRRKK.

It belongs to the universal ribosomal protein uL2 family. In terms of assembly, part of the 50S ribosomal subunit. Forms a bridge to the 30S subunit in the 70S ribosome.

One of the primary rRNA binding proteins. Required for association of the 30S and 50S subunits to form the 70S ribosome, for tRNA binding and peptide bond formation. It has been suggested to have peptidyltransferase activity; this is somewhat controversial. Makes several contacts with the 16S rRNA in the 70S ribosome. This Nautilia profundicola (strain ATCC BAA-1463 / DSM 18972 / AmH) protein is Large ribosomal subunit protein uL2.